The chain runs to 55 residues: Large ribosomal subunit protein bL33 (55 aa).

It belongs to the bacterial ribosomal protein bL33 family.

In Methylacidiphilum infernorum (isolate V4) (Methylokorus infernorum (strain V4)), this protein is Large ribosomal subunit protein bL33.